A 416-amino-acid polypeptide reads, in one-letter code: Phosphoglycerate kinase (416 aa).

(2R)-3-phosphoglycerate contacts are provided by Val-23, Asp-24, Phe-25, Asn-26, Arg-39, Ser-62, His-63, Gly-65, Arg-66, Leu-121, Arg-122, His-169, and Arg-170. Gly-213 contributes to the ADP binding site. Gly-213 is a CDP binding site. AMP is bound by residues Ala-214 and Lys-215. Position 214 (Ala-214) interacts with ATP. Mg(2+) is bound at residue Ala-214. Asp-218 contributes to the CDP binding site. Residue Asp-218 participates in Mg(2+) binding. Residue Lys-219 participates in AMP binding. Position 219 (Lys-219) interacts with ATP. An ADP-binding site is contributed by Gly-237. Gly-237 is a binding site for CDP. AMP contacts are provided by Gly-238 and Gly-312. Residues Gly-238 and Gly-312 each contribute to the ATP site. The CDP site is built by Gly-337 and Phe-342. An ADP-binding site is contributed by Phe-342. Glu-343 is a binding site for AMP. Glu-343, Asp-374, and Thr-375 together coordinate ATP. A Mg(2+)-binding site is contributed by Asp-374.

This sequence belongs to the phosphoglycerate kinase family. As to quaternary structure, monomer. It depends on Mg(2+) as a cofactor.

The protein resides in the cytoplasm. It localises to the mitochondrion. The enzyme catalyses (2R)-3-phosphoglycerate + ATP = (2R)-3-phospho-glyceroyl phosphate + ADP. It functions in the pathway carbohydrate degradation; glycolysis; pyruvate from D-glyceraldehyde 3-phosphate: step 2/5. In terms of biological role, catalyzes one of the two ATP producing reactions in the glycolytic pathway via the reversible conversion of 1,3-diphosphoglycerate to 3-phosphoglycerate. Both L- and D- forms of purine and pyrimidine nucleotides can be used as substrates, but the activity is much lower on pyrimidines. Negatively regulates the biosynthesis of acetyl-CoA from pyruvate in the mitochondrion. The chain is Phosphoglycerate kinase (pgkA) from Agaricus bisporus (White button mushroom).